The primary structure comprises 126 residues: Mating-type protein A1 (126 aa).

A DNA-binding region (homeobox) is located at residues 70 to 126; it reads SPKGKSSISPQARAFLEQVFRRKQSLNSKEKEEVAKKCGITPLQVRVWFINKRMRSK.

Belongs to the MATA1 family. As to quaternary structure, binds DNA with a high specificity as a heterodimer of A1 and ALPHA2.

The protein resides in the nucleus. Functionally, mating type proteins are sequence specific DNA-binding proteins that act as master switches in yeast differentiation by controlling gene expression in a cell type-specific fashion. Transcriptional corepressor that, in a/alpha diploid cells, binds cooperatively with the ALPHA2 protein to a 21-bp DNA sequence termed the haploid-specific gene (hsg) operator, to repress transcription of haploid-specific genes and of MATALPHA1. The protein is Mating-type protein A1 (MATA1) of Saccharomyces cerevisiae (Baker's yeast).